Reading from the N-terminus, the 150-residue chain is Ribonuclease K6 (150 aa).

Positions 1–23 (MVLCFPLLLLVLVLWGQVCPLHA) are cleaved as a signal peptide. The Proton acceptor role is filled by His38. Disulfide bonds link Cys46/Cys104, Cys60/Cys114, Cys78/Cys129, and Cys85/Cys92. Asn55 carries an N-linked (GlcNAc...) asparagine glycan. Substrate-binding positions include 61–65 (KPQNT) and Lys86. An N-linked (GlcNAc...) asparagine glycan is attached at Asn100. Arg105 serves as a coordination point for substrate. The Proton donor role is filled by His145.

It belongs to the pancreatic ribonuclease family. Interacts (via N-terminus) with bacterial lipopolysaccharide (LPS).

The protein localises to the secreted. Its subcellular location is the lysosome. The protein resides in the cytoplasmic granule. In terms of biological role, ribonuclease which shows a preference for the pyrimidines uridine and cytosine. Has potent antibacterial activity against a range of Gram-positive and Gram-negative bacteria, including P.aeruginosa, A.baumanii, M.luteus, S.aureus, E.faecalis, E.faecium, S.saprophyticus and E.coli. Causes loss of bacterial membrane integrity, and also promotes agglutination of Gram-negative bacteria. Probably contributes to urinary tract sterility. Bactericidal activity is independent of RNase activity. The polypeptide is Ribonuclease K6 (RNASE6) (Aotus trivirgatus (Three-striped night monkey)).